The sequence spans 279 residues: Prostatic spermine-binding protein (279 aa).

A signal peptide spans 1-17 (MLLLVTLALLAGPTCRA). The residue at position 18 (glutamine 18) is a Pyrrolidone carboxylic acid. Residues 18 to 151 (QNILGNNVGT…LNGMGFKWKN (134 aa)) enclose the Jacalin-type lectin domain. N-linked (GlcNAc...) asparagine glycosylation occurs at asparagine 62. Acidic residues-rich tracts occupy residues 160-177 (DDDK…NEED) and 185-279 (NDHD…EEEE). The segment at 160-279 (DDDKEDDDDE…DDDNGDEEEE (120 aa)) is disordered.

The protein to mouse SBP. As to expression, prostate.

Functionally, spermine-binding protein is an androgen regulated ventral prostate glycoprotein that binds various polyamines. The sequence is that of Prostatic spermine-binding protein (Sbp) from Rattus norvegicus (Rat).